The sequence spans 230 residues: Ribonuclease 3 (230 aa).

Positions 7-134 (LEELESKLGI…VIAAIYLDKG (128 aa)) constitute an RNase III domain. Glutamate 47 lines the Mg(2+) pocket. Aspartate 51 is a catalytic residue. Mg(2+) is bound by residues aspartate 120 and glutamate 123. The active site involves glutamate 123. The DRBM domain maps to 161 to 230 (DYKTRLQEIL…ACKALKGLDN (70 aa)).

It belongs to the ribonuclease III family. Homodimer. Requires Mg(2+) as cofactor.

It localises to the cytoplasm. It catalyses the reaction Endonucleolytic cleavage to 5'-phosphomonoester.. Digests double-stranded RNA. Involved in the processing of primary rRNA transcript to yield the immediate precursors to the large and small rRNAs (23S and 16S). Processes some mRNAs, and tRNAs when they are encoded in the rRNA operon. Processes pre-crRNA and tracrRNA of type II CRISPR loci if present in the organism. The chain is Ribonuclease 3 from Clostridium acetobutylicum (strain ATCC 824 / DSM 792 / JCM 1419 / IAM 19013 / LMG 5710 / NBRC 13948 / NRRL B-527 / VKM B-1787 / 2291 / W).